The sequence spans 305 residues: Peroxisome assembly protein 26 (305 aa).

A disordered region spans residues 1 to 20 (MKSDSSTSAAPLRGLGGPLR). At 1-246 (MKSDSSTSAA…RQLWDSAVSH (246 aa)) the chain is on the cytoplasmic side. A helical; Signal-anchor for type II membrane protein membrane pass occupies residues 247-267 (FFSLPFKKSLLAALILCLLVV). At 268–305 (RFDPASPSSLHFLYKLAQLFRWIRKAAFSRLYQLRIRD) the chain is on the peroxisomal matrix side.

This sequence belongs to the peroxin-26 family. In terms of assembly, interacts (via its cytoplasmic domain) with PEX6; interaction is direct and is ATP-dependent. Interacts with PEX1; interaction is indirect and is mediated via interaction with PEX6. Widely expressed. Highly expressed in kidney, liver, brain and skeletal muscles. Expressed at intermediate level in pancreas, placenta and heart. Weakly expressed in lung.

The protein resides in the peroxisome membrane. Functionally, peroxisomal docking factor that anchors PEX1 and PEX6 to peroxisome membranes. PEX26 is therefore required for the formation of the PEX1-PEX6 AAA ATPase complex, a complex that mediates the extraction of the PEX5 receptor from peroxisomal membrane. The protein is Peroxisome assembly protein 26 of Homo sapiens (Human).